A 155-amino-acid polypeptide reads, in one-letter code: MYPAHLLVLLAVCVSLLGASAISNRPRNLVQFSELIQCVNKGKRATYHYMDYGCYCGKGGSGTPVDALDRCCKTHDDCYGQAEKKGCFPLLSLYNFACFPGAPQCGKGNTCQRFVCACDLKAALCFAKSPYNNNNYNIDIKKKCQTLIYMRLQTQ.

The signal sequence occupies residues 1-21; that stretch reads MYPAHLLVLLAVCVSLLGASA. The propeptide occupies 22–27; that stretch reads ISNRPR. Disulfide bonds link Cys-38/Cys-98, Cys-54/Cys-144, Cys-56/Cys-72, Cys-71/Cys-125, Cys-78/Cys-118, Cys-87/Cys-111, and Cys-105/Cys-116. The Ca(2+) site is built by Tyr-55, Gly-57, and Gly-59. The active site involves His-75. Asp-76 serves as a coordination point for Ca(2+). Residue Asp-119 is part of the active site.

Belongs to the phospholipase A2 family. Group I subfamily. D49 sub-subfamily. Requires Ca(2+) as cofactor. In terms of tissue distribution, expressed by the venom gland.

It localises to the secreted. It carries out the reaction a 1,2-diacyl-sn-glycero-3-phosphocholine + H2O = a 1-acyl-sn-glycero-3-phosphocholine + a fatty acid + H(+). Functionally, snake venom phospholipase A2 (PLA2) that inhibits neuromuscular transmission by blocking acetylcholine release from the nerve termini. PLA2 catalyzes the calcium-dependent hydrolysis of the 2-acyl groups in 3-sn-phosphoglycerides. The protein is Basic phospholipase A2 PC1 of Laticauda colubrina (Yellow-lipped sea krait).